We begin with the raw amino-acid sequence, 119 residues long: Beta-2-microglobulin (119 aa).

Positions 1–20 (MARSVVVSLFVLLALAGLEA) are cleaved as a signal peptide. One can recognise an Ig-like C1-type domain in the interval 25–114 (PKIQVYSRHP…VTFQTPKTVK (90 aa)).

It belongs to the beta-2-microglobulin family. In terms of assembly, heterodimer of an alpha chain and a beta chain. Beta-2-microglobulin is the beta-chain of major histocompatibility complex class I molecules.

The protein resides in the secreted. Component of the class I major histocompatibility complex (MHC). Involved in the presentation of peptide antigens to the immune system. The protein is Beta-2-microglobulin (B2M) of Brachyteles arachnoides (Southern muriqui).